We begin with the raw amino-acid sequence, 429 residues long: Argininosuccinate lyase (429 aa).

Belongs to the lyase 1 family. Argininosuccinate lyase subfamily.

It is found in the cytoplasm. The catalysed reaction is 2-(N(omega)-L-arginino)succinate = fumarate + L-arginine. The protein operates within amino-acid biosynthesis; L-arginine biosynthesis; L-arginine from L-ornithine and carbamoyl phosphate: step 3/3. This Pyrobaculum calidifontis (strain DSM 21063 / JCM 11548 / VA1) protein is Argininosuccinate lyase.